A 417-amino-acid polypeptide reads, in one-letter code: NADH-quinone oxidoreductase subunit D (417 aa).

Belongs to the complex I 49 kDa subunit family. As to quaternary structure, NDH-1 is composed of 14 different subunits. Subunits NuoB, C, D, E, F, and G constitute the peripheral sector of the complex.

The protein resides in the cell inner membrane. The enzyme catalyses a quinone + NADH + 5 H(+)(in) = a quinol + NAD(+) + 4 H(+)(out). In terms of biological role, NDH-1 shuttles electrons from NADH, via FMN and iron-sulfur (Fe-S) centers, to quinones in the respiratory chain. The immediate electron acceptor for the enzyme in this species is believed to be ubiquinone. Couples the redox reaction to proton translocation (for every two electrons transferred, four hydrogen ions are translocated across the cytoplasmic membrane), and thus conserves the redox energy in a proton gradient. The protein is NADH-quinone oxidoreductase subunit D of Burkholderia orbicola (strain MC0-3).